The primary structure comprises 562 residues: Protein wntless (562 aa).

Residues 1-13 (MSGTILENLSGRK) are Cytoplasmic-facing. The helical transmembrane segment at 14 to 34 (LSILVASLLLCQVFCFLLGGL) threads the bilayer. The Lumenal portion of the chain corresponds to 35-239 (YAPLPAGHVT…AIHQNGGFTQ (205 aa)). The N-linked (GlcNAc...) asparagine glycan is linked to asparagine 58. A helical transmembrane segment spans residues 240 to 260 (IWLMLKTVLFPFVVGIMIWFW). The Cytoplasmic segment spans residues 261 to 270 (RRVHLLQRSP). The helical transmembrane segment at 271–291 (ALLEYMLIYLGGALTFLNLPL) threads the bilayer. Residues 292–311 (EYLSLVVEMPYMLLLSDIRQ) lie on the Lumenal side of the membrane. The helical transmembrane segment at 312 to 332 (GIFYAMLLSFWLVFAGEHMLI) threads the bilayer. The Cytoplasmic segment spans residues 333–344 (QDAPNKSTIRSR). A helical transmembrane segment spans residues 345–365 (YWKHLSAVVVGCISLFVFDIC). Residues 366-390 (ERGVQLRNPFYSIWTTPLGAKVAMT) are Lumenal-facing. A helical membrane pass occupies residues 391 to 411 (FIILAGVSAAIYFLFLCYMIW). The Cytoplasmic segment spans residues 412-441 (KVFRNIGDKRTSLPSMSQARRLHYEGLIYR). A helical membrane pass occupies residues 442 to 462 (FKFLMLATLLCAALTVAGFIM). The Lumenal segment spans residues 463–482 (GQMAEGQWQWNDNVEIQLTS). The helical transmembrane segment at 483-503 (AFLTGVYGMWNIYIFALLILY) threads the bilayer. The Cytoplasmic portion of the chain corresponds to 504-562 (APSHKQWPTMHHSDETTQSNENIVASAASEEIEFSHLPSDSNPSEISSLTSFTRKVAFD). The interval 539 to 562 (HLPSDSNPSEISSLTSFTRKVAFD) is disordered. Residues 541-556 (PSDSNPSEISSLTSFT) show a composition bias toward polar residues.

It belongs to the wntless family. In terms of assembly, interacts with wg; in the Golgi. Interacts with Vps35, a component of the retromer complex; wls stability is regulated by Vps35.

It is found in the presynaptic cell membrane. The protein resides in the postsynaptic cell membrane. Its subcellular location is the cell membrane. It localises to the endoplasmic reticulum membrane. The protein localises to the endosome membrane. It is found in the golgi apparatus membrane. A segment polarity gene required for wingless (wg)-dependent patterning processes, acting in both wg-sending cells and wg-target cells. In non-neuronal cells wls directs wg secretion. The wls traffic loop encompasses the Golgi, the cell surface, an endocytic compartment and a retrograde route leading back to the Golgi, and involves clathrin-mediated endocytosis and the retromer complex (a conserved protein complex consisting of Vps35 and Vps26). In neuronal cells (the larval motorneuron NMJ), the wg signal moves across the synapse via the release of wls-containing exosome-like vesicles. Postsynaptic wls is required for the trafficking of fz2 through the fz2-interacting protein Grip. This Drosophila ananassae (Fruit fly) protein is Protein wntless.